A 149-amino-acid chain; its full sequence is Calmodulin (149 aa).

An N-acetylalanine modification is found at alanine 2. EF-hand domains are found at residues 8 to 43 (EQIA…LGQN), 44 to 79 (PTEA…KMKD), 81 to 116 (DSEE…LGEK), and 117 to 149 (LTDE…MTNK). Residues aspartate 21, aspartate 23, aspartate 25, threonine 27, glutamate 32, aspartate 57, aspartate 59, asparagine 61, threonine 63, glutamate 68, aspartate 94, aspartate 96, asparagine 98, and glutamate 105 each coordinate Ca(2+). N6,N6,N6-trimethyllysine is present on lysine 116. 5 residues coordinate Ca(2+): aspartate 130, aspartate 132, aspartate 134, glutamine 136, and glutamate 141.

This sequence belongs to the calmodulin family.

Functionally, calmodulin mediates the control of a large number of enzymes, ion channels and other proteins by Ca(2+). Among the enzymes to be stimulated by the calmodulin-Ca(2+) complex are a number of protein kinases and phosphatases. This Ciona intestinalis (Transparent sea squirt) protein is Calmodulin.